The primary structure comprises 67 residues: Putative sodium channel alpha-toxin Acra7 (67 aa).

In terms of domain architecture, LCN-type CS-alpha/beta spans 2–66 (RDGYIVKPTN…PIKDPNQDCT (65 aa)). 4 cysteine pairs are disulfide-bonded: Cys12–Cys65, Cys16–Cys37, Cys23–Cys47, and Cys27–Cys49. Residue Arg67 is a propeptide, removed by a carboxypeptidase.

It belongs to the long (4 C-C) scorpion toxin superfamily. Sodium channel inhibitor family. Alpha subfamily. In terms of tissue distribution, expressed by the venom gland.

It is found in the secreted. In terms of biological role, alpha toxins bind voltage-independently at site-3 of sodium channels (Nav) and inhibit the inactivation of the activated channels, thereby blocking neuronal transmission. The protein is Putative sodium channel alpha-toxin Acra7 of Androctonus crassicauda (Arabian fat-tailed scorpion).